Here is a 162-residue protein sequence, read N- to C-terminus: UPF0260 protein Atu0932 (162 aa).

Belongs to the UPF0260 family.

This chain is UPF0260 protein Atu0932, found in Agrobacterium fabrum (strain C58 / ATCC 33970) (Agrobacterium tumefaciens (strain C58)).